The sequence spans 397 residues: Penicillopepsin-1 (397 aa).

The first 20 residues, 1–20 (MVVFSQVTVALTCFSAIASA), serve as a signal peptide directing secretion. Residues 21 to 71 (AAVRQEPPQGFTVNQVQKAVPGTRTVNLPGLYANALVKYGATVPATVHAAA) constitute a propeptide, activation peptide. The 308-residue stretch at 87 to 394 (YLTPVTIGSS…DSEGPRLGFA (308 aa)) folds into the Peptidase A1 domain. Residues aspartate 103 and aspartate 285 contribute to the active site. Asparagine 311 carries N-linked (GlcNAc...) asparagine glycosylation. Cysteine 322 and cysteine 357 form a disulfide bridge.

Belongs to the peptidase A1 family. In terms of assembly, monomer.

The protein localises to the secreted. It catalyses the reaction Hydrolysis of proteins with broad specificity similar to that of pepsin A, preferring hydrophobic residues at P1 and P1', but also cleaving 20-Gly-|-Glu-21 in the B chain of insulin. Clots milk, and activates trypsinogen.. Its function is as follows. Secreted aspartic endopeptidase that allows assimilation of proteinaceous substrates. The scissile peptide bond is attacked by a nucleophilic water molecule activated by two aspartic residues in the active site. Shows a broad primary substrate specificity. Favors hydrophobic residues at the P1 and P1' positions, but can also activate trypsinogen and hydrolyze the B chain of insulin between positions 'Gly-20' and 'Glu-21'. The protein is Penicillopepsin-1 of Penicillium roqueforti.